A 208-amino-acid polypeptide reads, in one-letter code: FMN-dependent NADH:quinone oxidoreductase (208 aa).

99 to 102 (MWNF) is an FMN binding site.

Belongs to the azoreductase type 1 family. Homodimer. Requires FMN as cofactor.

The enzyme catalyses 2 a quinone + NADH + H(+) = 2 a 1,4-benzosemiquinone + NAD(+). The catalysed reaction is N,N-dimethyl-1,4-phenylenediamine + anthranilate + 2 NAD(+) = 2-(4-dimethylaminophenyl)diazenylbenzoate + 2 NADH + 2 H(+). In terms of biological role, quinone reductase that provides resistance to thiol-specific stress caused by electrophilic quinones. Functionally, also exhibits azoreductase activity. Catalyzes the reductive cleavage of the azo bond in aromatic azo compounds to the corresponding amines. The protein is FMN-dependent NADH:quinone oxidoreductase of Brevibacillus brevis (strain 47 / JCM 6285 / NBRC 100599).